A 612-amino-acid polypeptide reads, in one-letter code: Protein NorD (612 aa).

The disordered stretch occupies residues 220–246; that stretch reads EGEGDLETPPSGQSRQRNGARRVDDSS. Residues 420–609 form the VWFA domain; the sequence is DLACLLLADL…FPPAAAVQAT (190 aa).

In terms of biological role, component of the anaerobic respiratory chain that transforms nitrate to dinitrogen (denitrification). This is Protein NorD (norD) from Stutzerimonas stutzeri (Pseudomonas stutzeri).